The primary structure comprises 51 residues: Large ribosomal subunit protein eL39 (51 aa).

The tract at residues Met-1–Met-23 is disordered. The segment covering Ser-7–Gln-19 has biased composition (basic residues).

It belongs to the eukaryotic ribosomal protein eL39 family. In terms of assembly, interacts with impact.

This Caenorhabditis elegans protein is Large ribosomal subunit protein eL39 (rpl-39).